Here is a 358-residue protein sequence, read N- to C-terminus: DNA polymerase IV (358 aa).

The 182-residue stretch at 4–185 (IIHIDMDCYF…LSLRKIPGVG (182 aa)) folds into the UmuC domain. D8 and D103 together coordinate Mg(2+). E104 is an active-site residue.

Belongs to the DNA polymerase type-Y family. In terms of assembly, monomer. It depends on Mg(2+) as a cofactor.

Its subcellular location is the cytoplasm. The catalysed reaction is DNA(n) + a 2'-deoxyribonucleoside 5'-triphosphate = DNA(n+1) + diphosphate. In terms of biological role, poorly processive, error-prone DNA polymerase involved in untargeted mutagenesis. Copies undamaged DNA at stalled replication forks, which arise in vivo from mismatched or misaligned primer ends. These misaligned primers can be extended by PolIV. Exhibits no 3'-5' exonuclease (proofreading) activity. May be involved in translesional synthesis, in conjunction with the beta clamp from PolIII. The sequence is that of DNA polymerase IV from Shewanella baltica (strain OS195).